Here is a 632-residue protein sequence, read N- to C-terminus: Putative acetyl-CoA decarbonylase/synthase complex subunit alpha-like (632 aa).

Positions 200, 226, 263, 379, 408, and 438 each coordinate [Ni-4Fe-4S] cluster.

Belongs to the Ni-containing carbon monoxide dehydrogenase family.

In terms of biological role, part of the ACDS complex that catalyzes the reversible cleavage of acetyl-CoA, allowing autotrophic growth from CO(2). The alpha-epsilon subcomponent functions as a carbon monoxide dehydrogenase. This chain is Putative acetyl-CoA decarbonylase/synthase complex subunit alpha-like (cdhA2), found in Methanopyrus kandleri (strain AV19 / DSM 6324 / JCM 9639 / NBRC 100938).